A 616-amino-acid chain; its full sequence is Spastin (616 aa).

A disordered region spans residues 1–43; sequence MNSPGGRGKKKGSGGASNPVPPRPPPPCLAPAPPAAGPAPPPE. Residues 1–50 form a required for nuclear localization region; sequence MNSPGGRGKKKGSGGASNPVPPRPPPPCLAPAPPAAGPAPPPESPHKRNL. Residues 1–56 are Cytoplasmic-facing; sequence MNSPGGRGKKKGSGGASNPVPPRPPPPCLAPAPPAAGPAPPPESPHKRNLYYFSYP. Positions 1-80 are required for interaction with ATL1; that stretch reads MNSPGGRGKK…LGLLFVWLCQ (80 aa). The segment at 1 to 194 is required for midbody localization; it reads MNSPGGRGKK…LVMAKDRLQL (194 aa). Positions 1–300 are required for interaction with RTN1; sequence MNSPGGRGKK…GTPKTNRTNK (300 aa). The Nuclear localization signal motif lies at 4 to 11; the sequence is PGGRGKKK. The span at 19-43 shows a compositional bias: pro residues; sequence PVPPRPPPPCLAPAPPAAGPAPPPE. The required for interaction with SSNA1 and microtubules stretch occupies residues 50–87; sequence LYYFSYPLFVGFALLRLVAFHLGLLFVWLCQRFSRALM. An intramembrane region (helical) is located at residues 57 to 77; the sequence is LFVGFALLRLVAFHLGLLFVW. A Nuclear export signal motif is present at residues 59–67; that stretch reads VGFALLRLV. Residues 78 to 616 lie on the Cytoplasmic side of the membrane; sequence LCQRFSRALM…WNKDFGDTTV (539 aa). Residues 112 to 196 form a sufficient for interaction with CHMP1B region; that stretch reads EAERVRVFHK…MAKDRLQLLE (85 aa). The interval 114 to 200 is required for interaction with microtubules; that stretch reads ERVRVFHKQA…RLQLLEKMQP (87 aa). In terms of domain architecture, MIT spans 120 to 195; the sequence is HKQAFEYISI…VMAKDRLQLL (76 aa). Residues 224 to 266 form a disordered region; the sequence is HLQSESGAVPKRKDPLTHTSNSLPRSKTVMKTGSAGLSGHHRA. The sufficient for microtubule severing stretch occupies residues 228 to 616; sequence ESGAVPKRKD…WNKDFGDTTV (389 aa). Residues 240-254 show a composition bias toward polar residues; that stretch reads THTSNSLPRSKTVMK. A phosphoserine mark is found at Ser245 and Ser268. The segment at 270–328 is required for interaction with microtubules and microtubule severing; it reads SGLSMVSGVKQGSGPAPTTHKGTPKTNRTNKPSTPTTATRKKKDLKNFRNVDSNLANLI. The tract at residues 278 to 312 is disordered; sequence VKQGSGPAPTTHKGTPKTNRTNKPSTPTTATRKKK. Residues 289-307 are compositionally biased toward polar residues; the sequence is HKGTPKTNRTNKPSTPTTA. A Phosphothreonine modification is found at Thr306. The Nuclear localization signal signature appears at 309 to 312; the sequence is RKKK. Residues 310–312 are required for interaction with microtubules; it reads KKK. 382-389 contributes to the ATP binding site; it reads GPPGNGKT. The residue at position 597 (Ser597) is a Phosphoserine.

Belongs to the AAA ATPase family. Spastin subfamily. In terms of assembly, homohexamer. Mostly monomeric, but assembles into hexameric structure for short periods of time. Oligomerization seems to be a prerequisite for catalytic activity. Binding to ATP in a cleft between two adjacent subunits stabilizes the homohexameric form. Binds to microtubules at least in part via the alpha-tubulin and beta-tubulin tails. The hexamer adopts a ring conformation through which microtubules pass prior to being severed. Does not interact strongly with tubulin heterodimers. Interacts (via MIT domain) with CHMP1B; the interaction is direct. Interacts with SSNA1. Interacts with ATL1. Interacts with RTN1. Interacts with ZFYVE27. Isoform 1 but not isoform 3 interacts with RTN2. Interacts with REEP1. Interacts (via MIT domain) with IST1. In terms of tissue distribution, expressed in brain, heart, kidney, liver, lung, pancreas, placenta and skeletal muscle. The short isoforms may predominate in brain and spinal cord.

Its subcellular location is the membrane. It is found in the endoplasmic reticulum. The protein resides in the midbody. It localises to the cytoplasm. The protein localises to the cytoskeleton. Its subcellular location is the microtubule organizing center. It is found in the centrosome. The protein resides in the perinuclear region. It localises to the nucleus. The protein localises to the spindle. Its subcellular location is the cell projection. It is found in the axon. The protein resides in the endoplasmic reticulum membrane. It localises to the nucleus membrane. The protein localises to the lipid droplet. Its subcellular location is the endosome. It carries out the reaction n ATP + n H2O + a microtubule = n ADP + n phosphate + (n+1) alpha/beta tubulin heterodimers.. Allosteric enzyme with a cooperative mechanism; at least two neighbor subunits influence each other strongly in spastin hexamers. Microtubule binding promotes cooperative interactions among spastin subunits. ATP-bound enzyme interacts strongly and cooperatively with microtubules; this interaction stimulates ATP hydrolysis. ATP-dependent microtubule severing protein that specifically recognizes and cuts microtubules that are polyglutamylated. Preferentially recognizes and acts on microtubules decorated with short polyglutamate tails: severing activity increases as the number of glutamates per tubulin rises from one to eight, but decreases beyond this glutamylation threshold. Severing activity is not dependent on tubulin acetylation or detyrosination. Microtubule severing promotes reorganization of cellular microtubule arrays and the release of microtubules from the centrosome following nucleation. It is critical for the biogenesis and maintenance of complex microtubule arrays in axons, spindles and cilia. SPAST is involved in abscission step of cytokinesis and nuclear envelope reassembly during anaphase in cooperation with the ESCRT-III complex. Recruited at the midbody, probably by IST1, and participates in membrane fission during abscission together with the ESCRT-III complex. Recruited to the nuclear membrane by IST1 and mediates microtubule severing, promoting nuclear envelope sealing and mitotic spindle disassembly during late anaphase. Required for membrane traffic from the endoplasmic reticulum (ER) to the Golgi and endosome recycling. Recruited by IST1 to endosomes and regulates early endosomal tubulation and recycling by mediating microtubule severing. Probably plays a role in axon growth and the formation of axonal branches. In terms of biological role, involved in lipid metabolism by regulating the size and distribution of lipid droplets. The protein is Spastin of Homo sapiens (Human).